We begin with the raw amino-acid sequence, 509 residues long: O-acetyltransferase anaAT (509 aa).

It belongs to the fumigaclavine B O-acetyltransferase family. In terms of assembly, monomer.

The enzyme catalyses (2R,3S,11R)-aszonalenin + acetyl-CoA = (2R,3S,11R)-acetylaszonalenin + CoA. The protein operates within alkaloid biosynthesis. O-acetyltransferase; part of the gene cluster that mediates the biosynthesis of the prenylated pyrroloindoline diketopiperazine acetylaszonalenin. The first step in the pathway is the formation of (R)-benzodiazepinedione by condensation of tryptophan and anthranilic acid catalyzed by the non-ribosomal peptide synthetase anaPS. The prenyltransferase anaPT then converts (R)-benzodiazepinedione to aszonalenin in the presence of dimethylallyl diphosphate (DMAPP) via C3-prenylation. The last step in the biosynthesis of acetylaszonalenin via acetylation of aszonalenin at position N1 catalyzed by anaAT. The protein is O-acetyltransferase anaAT of Neosartorya fischeri (strain ATCC 1020 / DSM 3700 / CBS 544.65 / FGSC A1164 / JCM 1740 / NRRL 181 / WB 181) (Aspergillus fischerianus).